We begin with the raw amino-acid sequence, 898 residues long: Chaperone protein ClpB 1 (898 aa).

A Clp R domain is found at 6–148 (PTKFTEQAWD…ELAIKAIRGS (143 aa)). Repeat stretches follow at residues 9-74 (FTEQ…TNRQ) and 85-148 (LGRS…IRGS). The interval 161–344 (EALDKYGRDL…RRFQQVYVKQ (184 aa)) is NBD1. 208–215 (GEPGVGKT) serves as a coordination point for ATP. Positions 345 to 560 (PSVDDTISIL…IAEIVAGWTG (216 aa)) are linker. Positions 395-536 (IDLVDEAAAR…KESKLLEIQG (142 aa)) form a coiled coil. Positions 570 to 781 (ERQKLLQLEG…RIDDLIIFHT (212 aa)) are NBD2. ATP is bound at residue 620–627 (GPTGVGKT). The C-terminal stretch occupies residues 782–898 (LKRDELRRIV…TAVEVEVLSS (117 aa)).

This sequence belongs to the ClpA/ClpB family. As to quaternary structure, homohexamer. The oligomerization is ATP-dependent.

Its subcellular location is the cytoplasm. Part of a stress-induced multi-chaperone system, it is involved in the recovery of the cell from heat-induced damage, in cooperation with DnaK, DnaJ and GrpE. Acts before DnaK, in the processing of protein aggregates. Protein binding stimulates the ATPase activity; ATP hydrolysis unfolds the denatured protein aggregates, which probably helps expose new hydrophobic binding sites on the surface of ClpB-bound aggregates, contributing to the solubilization and refolding of denatured protein aggregates by DnaK. This Synechocystis sp. (strain ATCC 27184 / PCC 6803 / Kazusa) protein is Chaperone protein ClpB 1 (clpB1).